Consider the following 212-residue polypeptide: MAVKPKTTKAKVELPPFEYPQGYQLVAGVDEVGRGPLVGDVVTAAVILDPNNPIEGLNDSKKLSEKKRLALLPEIKEKALAWAVGRCSPEEIDELNILQATMVAMQRAIAGLKVQPDLALIDGNRCPELPMDSQAVVKGDLRVAEISAASIIAKVVRDQEMEELDKQYPQFGFAKHKGYPTKAHFEAIEQHGVISEHRKSFKPVKKALGIEE.

The RNase H type-2 domain occupies 24–212; that stretch reads QLVAGVDEVG…PVKKALGIEE (189 aa). 3 residues coordinate a divalent metal cation: D30, E31, and D122.

It belongs to the RNase HII family. Requires Mn(2+) as cofactor. It depends on Mg(2+) as a cofactor.

It is found in the cytoplasm. It catalyses the reaction Endonucleolytic cleavage to 5'-phosphomonoester.. Endonuclease that specifically degrades the RNA of RNA-DNA hybrids. The protein is Ribonuclease HII of Vibrio campbellii (strain ATCC BAA-1116).